A 412-amino-acid polypeptide reads, in one-letter code: Peptidase T (412 aa).

Histidine 84 contacts Zn(2+). The active site involves aspartate 86. Position 146 (aspartate 146) interacts with Zn(2+). The Proton acceptor role is filled by glutamate 179. Zn(2+)-binding residues include glutamate 180, aspartate 202, and histidine 385.

It belongs to the peptidase M20B family. The cofactor is Zn(2+).

It is found in the cytoplasm. The catalysed reaction is Release of the N-terminal residue from a tripeptide.. Cleaves the N-terminal amino acid of tripeptides. The polypeptide is Peptidase T (Haemophilus influenzae (strain PittEE)).